Reading from the N-terminus, the 287-residue chain is Acetyl-coenzyme A carboxylase carboxyl transferase subunit beta (287 aa).

One can recognise a CoA carboxyltransferase N-terminal domain in the interval 25–287 (VWTKCSACEQ…KMLNTHVIEE (263 aa)). The Zn(2+) site is built by Cys29, Cys32, Cys48, and Cys51. The C4-type zinc finger occupies 29 to 51 (CSACEQVLYRAELERNLEVCPKC).

Belongs to the AccD/PCCB family. Acetyl-CoA carboxylase is a heterohexamer composed of biotin carboxyl carrier protein (AccB), biotin carboxylase (AccC) and two subunits each of ACCase subunit alpha (AccA) and ACCase subunit beta (AccD). Zn(2+) is required as a cofactor.

It localises to the cytoplasm. It carries out the reaction N(6)-carboxybiotinyl-L-lysyl-[protein] + acetyl-CoA = N(6)-biotinyl-L-lysyl-[protein] + malonyl-CoA. Its pathway is lipid metabolism; malonyl-CoA biosynthesis; malonyl-CoA from acetyl-CoA: step 1/1. Component of the acetyl coenzyme A carboxylase (ACC) complex. Biotin carboxylase (BC) catalyzes the carboxylation of biotin on its carrier protein (BCCP) and then the CO(2) group is transferred by the transcarboxylase to acetyl-CoA to form malonyl-CoA. The chain is Acetyl-coenzyme A carboxylase carboxyl transferase subunit beta from Aeromonas hydrophila subsp. hydrophila (strain ATCC 7966 / DSM 30187 / BCRC 13018 / CCUG 14551 / JCM 1027 / KCTC 2358 / NCIMB 9240 / NCTC 8049).